A 594-amino-acid polypeptide reads, in one-letter code: MSSLVMHVGIVNKPAITYLPTLSRSASNLHNVSSTRLQTSCSLQLDYKPVDETRRSGNYQPSAWDFEYIQSLKNKYKEEKYLTRHTKLTVQVKMLLDEDMEAVQQLDFIEDLNNLGISYLFKDKITQILNHIYNEHRCFHNNEAEESDLYFTALGFRLLRQHGFKVSQEVFDCFKNEKYTNFKASLAGDTKGLLQLYEASFLLREGEDTLELARKFSTKLLQQKIDEGEPDNNLLSCIRHSLELPLHWRLQRLEARWFLDAYATRHDMNPIIFELAKLEFNITQATQQEELKDLSRWWNSTGLAEKLPFARDRIVESYFWAMGTFEPHQYGYQRELVSKIIALTTVVDDIYDVYGTLEELELFTDVIRRWETESIDELPYYIQLCYLAVNKFVFDLAHDVLKDKGFNSLPYLKRSWKDLIERYLIEAKWYHNRYTPSLEEYLNNARVTITCPTILSQIYFALASPIEKPVIEVMYKYHDILYLSGMLLRLPDDLGTAPFELKRGDVPKAVQCYMKERNVPEKEAREHVRFLIREASKQMNTAMAIDCPFTEDFAVAAANLGRVANLAYVEGDGFGVQHSNIYEHIGSLMFKPYA.

Residues 1 to 50 (MSSLVMHVGIVNKPAITYLPTLSRSASNLHNVSSTRLQTSCSLQLDYKPV) constitute a chloroplast transit peptide. D348, D352, D492, and E500 together coordinate Mg(2+). Residues 348 to 352 (DDIYD) carry the DDXXD motif motif.

It belongs to the terpene synthase family. Tpsa subfamily. The cofactor is Mg(2+). Mn(2+) serves as cofactor. Expressed at high levels in leaves.

It localises to the plastid. It is found in the chloroplast. It carries out the reaction (2E)-geranyl diphosphate = alpha-pinene + diphosphate. It catalyses the reaction (2E)-geranyl diphosphate + H2O = (1S,2S,4R)-endo-fenchol + diphosphate. The catalysed reaction is (2E)-geranyl diphosphate = limonene + diphosphate. It participates in secondary metabolite biosynthesis; terpenoid biosynthesis. In terms of biological role, monoterpene synthase involved in the biosynthesis of volatile compounds widely used in aromatherapy and folk medicine, and present in culinary herbs. Mediates the conversion of (2E)-geranyl diphosphate (GPP) into alpha fenchol, limonene and alpha-pinene and, as minor compounds, into beta-myrcene, alpha-terpinolene and alpha-phellandrene. The protein is (-)-endo-fenchol synthase, chloroplastic of Lavandula pedunculata subsp. lusitanica (French lavender).